We begin with the raw amino-acid sequence, 203 residues long: dITP/XTP pyrophosphatase (203 aa).

Residue 7-12 (TGNRDK) participates in substrate binding. Asp73 acts as the Proton acceptor in catalysis. Asp73 contacts Mg(2+). Substrate is bound by residues Ser74, 155 to 158 (FGYD), Lys178, and 183 to 184 (HR).

This sequence belongs to the HAM1 NTPase family. In terms of assembly, homodimer. The cofactor is Mg(2+).

It catalyses the reaction XTP + H2O = XMP + diphosphate + H(+). The catalysed reaction is dITP + H2O = dIMP + diphosphate + H(+). The enzyme catalyses ITP + H2O = IMP + diphosphate + H(+). Functionally, pyrophosphatase that catalyzes the hydrolysis of nucleoside triphosphates to their monophosphate derivatives, with a high preference for the non-canonical purine nucleotides XTP (xanthosine triphosphate), dITP (deoxyinosine triphosphate) and ITP. Seems to function as a house-cleaning enzyme that removes non-canonical purine nucleotides from the nucleotide pool, thus preventing their incorporation into DNA/RNA and avoiding chromosomal lesions. This is dITP/XTP pyrophosphatase from Wolinella succinogenes (strain ATCC 29543 / DSM 1740 / CCUG 13145 / JCM 31913 / LMG 7466 / NCTC 11488 / FDC 602W) (Vibrio succinogenes).